The sequence spans 326 residues: MLKILFMGTPEFAAVSLRALLEAGYPVVGVVTQPDKPAGRGGKLRPSPVKEVALAHGLPVFQPRRLRRPEVVAQLKELGSDLTVVVAYGQILSREALEISPLGSINVHASLLPRWRGAAPIQRAIMAGDVETGVCTMWMDEGMDTGDVCLTARVPIGPDTTGGELHDELARVGAELLLETVRRVEAGDAPRIPQPAEGVTYAAKLEPADEVIDWARPAEELYNQIRALNPWPGAYTNGPRGRLKIWRASVVPNPEPGAEPGTVVALVRREGFTVAAGDGALLVREVQPHGKARMDAQSFVNGGGVQVGTRFSPPEAPQREPAPGEA.

Residue 110–113 participates in (6S)-5,6,7,8-tetrahydrofolate binding; the sequence is SLLP. A disordered region spans residues 307 to 326; that stretch reads VGTRFSPPEAPQREPAPGEA.

It belongs to the Fmt family.

It carries out the reaction L-methionyl-tRNA(fMet) + (6R)-10-formyltetrahydrofolate = N-formyl-L-methionyl-tRNA(fMet) + (6S)-5,6,7,8-tetrahydrofolate + H(+). Its function is as follows. Attaches a formyl group to the free amino group of methionyl-tRNA(fMet). The formyl group appears to play a dual role in the initiator identity of N-formylmethionyl-tRNA by promoting its recognition by IF2 and preventing the misappropriation of this tRNA by the elongation apparatus. This chain is Methionyl-tRNA formyltransferase, found in Symbiobacterium thermophilum (strain DSM 24528 / JCM 14929 / IAM 14863 / T).